The chain runs to 1010 residues: Outer kinetochore KNL1 complex subunit knl-1 (1010 aa).

Tandem repeats lie at residues 85–88, 109–112, 228–231, 255–258, 278–281, 323–326, 346–349, 402–405, and 428–431. Residues 85 to 431 are 9 X 4 AA repeats of M-[D/E]-[I/L/M]-[S/T]; it reads MDISESPACT…LQKEDLMDIS (347 aa). Coiled coils occupy residues 820 to 915 and 956 to 988; these read RIVE…GLDK and KALRNVRSNMIALRSEKNALEMKVAEEHEKFAQ.

As to quaternary structure, component of the KNL1 complex composed of knl-1 and kbp-5. Part of the ten-subunit outer kinetochore KMN network that includes the KNL1, MIS12 and NDC80 complexes. Interacts with the protein phosphatase 1 (PP1) catalytic subunit gsp-1; the interaction is direct. Interacts with the protein phosphatase 1 (PP1) catalytic subunit gsp-2; the interaction is direct. Interacts with the MIS12 complex subunits kbp-1, kbp-2 and mis-12. Interacts with the NDC80 complex components ndc-80 and him-10. Interacts with knl-3. Interacts with kbp-3. Interacts with kbp-4. Interacts with kbp-5.

The protein resides in the cytoplasm. It is found in the cell cortex. The protein localises to the chromosome. It localises to the centromere. Its subcellular location is the kinetochore. In terms of biological role, acts as a component of the outer kinetochore KNL1 complex that serves as a docking point for spindle assembly checkpoint components and mediates microtubule-kinetochore interactions. Kinetochores, consisting of a centromere-associated inner segment and a microtubule-contacting outer segment, play a crucial role in chromosome segregation by mediating the physical connection between centromeric DNA and spindle microtubules. The outer kinetochore is made up of the ten-subunit KMN network, comprising the MIS12, NDC80 and KNL1 complexes, and auxiliary microtubule-associated components; together they connect the outer kinetochore with the inner kinetochore, bind microtubules, and mediate interactions with mitotic checkpoint proteins that delay anaphase until chromosomes are bioriented on the spindle. Binds the protein phosphatase 1 catalytic subunits gsp-1 and gsp-2, which has a role in delaying formation of load-bearing kinetochore-microtubule attachments. Required for the recruitment of spindle-assembly checkpoint components bub-1 and mdf-1/2 to unattached kinetochores. Binds microtubules which plays a role in silencing of the spindle assembly checkpoint, but not the formation of load-bearing microtubule-kinetochore attachments. Has a role in the correct localization of the spindly-like protein spdl-1 and the RZZ complex that is composed of rod-1, czw-1 and zwl-1 to kinetochores. The polypeptide is Outer kinetochore KNL1 complex subunit knl-1 (knl-1) (Caenorhabditis elegans).